The sequence spans 467 residues: Signal transduction histidine-protein kinase BaeS (467 aa).

Residues Met-1–Lys-11 are Cytoplasmic-facing. A helical transmembrane segment spans residues Leu-12–Arg-32. Over Ile-33–Ser-167 the chain is Periplasmic. Residues Trp-168–Ala-186 traverse the membrane as a helical segment. The region spanning Arg-187–Gln-239 is the HAMP domain. Residues Arg-187 to Val-467 lie on the Cytoplasmic side of the membrane. The region spanning Asp-247–Arg-461 is the Histidine kinase domain. His-250 carries the post-translational modification Phosphohistidine; by autocatalysis.

Post-translationally, autophosphorylated.

Its subcellular location is the cell inner membrane. The enzyme catalyses ATP + protein L-histidine = ADP + protein N-phospho-L-histidine.. In terms of biological role, member of the two-component regulatory system BaeS/BaeR which responds to envelope stress. Activates expression of periplasmic chaperone spy in response to spheroplast formation, indole and P pili protein PapG overexpression. Activates BaeR by phosphorylation which then activates the mdtABCD and probably the CRISPR-Cas casABCDE-ygbT-ygbF operons. In Escherichia coli (strain K12), this protein is Signal transduction histidine-protein kinase BaeS.